We begin with the raw amino-acid sequence, 281 residues long: Putative phosphatase/phosphodiesterase MG246 (281 aa).

Residues Asp-11, Glu-42, Asn-43, and Asn-70 each coordinate Fe cation. His-71 serves as the catalytic Proton donor. Positions 157, 182, and 184 each coordinate Fe cation.

This sequence belongs to the YmdB-like family. Requires Fe(3+) as cofactor.

The polypeptide is Putative phosphatase/phosphodiesterase MG246 (Mycoplasma genitalium (strain ATCC 33530 / DSM 19775 / NCTC 10195 / G37) (Mycoplasmoides genitalium)).